The primary structure comprises 90 residues: UPF0184 protein (90 aa).

Positions Asp16–Glu78 form a coiled coil. The tract at residues Ser57–Gln90 is disordered. Over residues Thr81–Gln90 the composition is skewed to basic and acidic residues.

Belongs to the UPF0184 (EST00098) family.

This Branchiostoma floridae (Florida lancelet) protein is UPF0184 protein.